A 631-amino-acid polypeptide reads, in one-letter code: Phosphomethylpyrimidine synthase (631 aa).

Residues Asn239, Met268, Tyr297, His333, 353 to 355 (SRG), 394 to 397 (DGLR), and Glu433 each bind substrate. Zn(2+) is bound at residue His437. Tyr460 lines the substrate pocket. A Zn(2+)-binding site is contributed by His501. Cys581, Cys584, and Cys589 together coordinate [4Fe-4S] cluster.

The protein belongs to the ThiC family. As to quaternary structure, homodimer. [4Fe-4S] cluster is required as a cofactor.

The catalysed reaction is 5-amino-1-(5-phospho-beta-D-ribosyl)imidazole + S-adenosyl-L-methionine = 4-amino-2-methyl-5-(phosphooxymethyl)pyrimidine + CO + 5'-deoxyadenosine + formate + L-methionine + 3 H(+). It participates in cofactor biosynthesis; thiamine diphosphate biosynthesis. Its function is as follows. Catalyzes the synthesis of the hydroxymethylpyrimidine phosphate (HMP-P) moiety of thiamine from aminoimidazole ribotide (AIR) in a radical S-adenosyl-L-methionine (SAM)-dependent reaction. This is Phosphomethylpyrimidine synthase from Salmonella typhi.